A 329-amino-acid chain; its full sequence is Quinone-oxidoreductase homolog, chloroplastic (329 aa).

This sequence belongs to the zinc-containing alcohol dehydrogenase family. Quinone oxidoreductase subfamily. The transit peptide is not cleaved.

It localises to the plastid. The protein resides in the chloroplast inner membrane. In Spinacia oleracea (Spinach), this protein is Quinone-oxidoreductase homolog, chloroplastic (QOR).